The following is a 346-amino-acid chain: NADH-quinone oxidoreductase subunit H (346 aa).

The next 8 membrane-spanning stretches (helical) occupy residues 6-26, 76-96, 128-148, 166-186, 198-218, 260-280, 289-309, and 324-344; these read ILFW…ACAY, IMYL…WSVV, ILFL…AGWA, ISYE…TGSL, LWNI…VAMF, ITMS…PFGI, LFGL…FVWV, and LGWK…SLYI.

This sequence belongs to the complex I subunit 1 family. As to quaternary structure, NDH-1 is composed of 14 different subunits. Subunits NuoA, H, J, K, L, M, N constitute the membrane sector of the complex.

It localises to the cell inner membrane. It carries out the reaction a quinone + NADH + 5 H(+)(in) = a quinol + NAD(+) + 4 H(+)(out). Functionally, NDH-1 shuttles electrons from NADH, via FMN and iron-sulfur (Fe-S) centers, to quinones in the respiratory chain. The immediate electron acceptor for the enzyme in this species is believed to be ubiquinone. Couples the redox reaction to proton translocation (for every two electrons transferred, four hydrogen ions are translocated across the cytoplasmic membrane), and thus conserves the redox energy in a proton gradient. This subunit may bind ubiquinone. The protein is NADH-quinone oxidoreductase subunit H of Leptospira borgpetersenii serovar Hardjo-bovis (strain JB197).